Here is a 304-residue protein sequence, read N- to C-terminus: MTESVFAVVVTHRRPDELAKSLDVLTAQTRLPDHLIVVDNDGCGDSPVRELVAGQPIATTYLGSRRNLGGAGGFALGMLHALAQGADWVWLADDDGHAQDARVLATLLACAEKYSLAEVSPMVCNIDDPTRLAFPLRRGLVWRRRASELRTEAGQELLPGIASLFNGALFRASTLAAIGVPDLRLFIRGDEVEMHRRLIRSGLPFGTCLDAAYLHPCGSDEFKPILCGRMHAQYPDDPGKRFFTYRNRGYVLSQPGLRKLLAQEWLRFGWFFLVTRRDPKGLWEWIRLRRLGRREKFGKPGGSA.

Belongs to the glycosyltransferase 2 family. Is probably part of an AG biosynthetic complex.

It localises to the cell membrane. The protein localises to the secreted. It is found in the cell wall. The enzyme catalyses alpha-L-rhamnosyl-(1-&gt;3)-N-acetyl-alpha-D-glucosaminyl-diphospho-trans,octa-cis-decaprenol + 2 UDP-alpha-D-galactofuranose = beta-D-galactofuranosyl-(1-&gt;5)-beta-D-galactofuranosyl-(1-&gt;4)-alpha-L-rhamnosyl-(1-&gt;3)-N-acetyl-alpha-D-glucosaminyl-diphospho-trans,octa-cis-decaprenol + 2 UDP + 2 H(+). It participates in cell wall biogenesis; cell wall polysaccharide biosynthesis. In terms of biological role, involved in the biosynthesis of the arabinogalactan (AG) region of the mycolylarabinogalactan-peptidoglycan (mAGP) complex, an essential component of the mycobacterial cell wall. Catalyzes the transfer of the first two galactofuranosyl (Galf) units from UDP-galactofuranose (UDP-Galf) onto the rhamnosyl-GlcNAc-diphospho-decaprenol (Rha-GlcNAc-PP-C50) acceptor, yielding galactofuranosyl-galactofuranosyl-rhamnosyl-GlcNAc-diphospho-decaprenol (Galf-Galf-Rha-GlcNAc-PP-C50). Thus, GlfT1 is the initiator of galactan synthesis, while GlfT2 continues with the subsequent polymerization events. This is Galactofuranosyltransferase GlfT1 from Mycobacterium tuberculosis (strain CDC 1551 / Oshkosh).